The primary structure comprises 166 residues: Heme-degrading monooxygenase HmoB (166 aa).

Residue Asn-33 participates in Fe cation binding. The 88-residue stretch at Phe-66–Phe-153 folds into the ABM domain. His-138 lines the heme pocket.

Belongs to the antibiotic biosynthesis monooxygenase family. Homodimer.

Its subcellular location is the cytoplasm. It carries out the reaction heme b + 3 reduced [NADPH--hemoprotein reductase] + 3 O2 = biliverdin IXalpha + CO + Fe(2+) + 3 oxidized [NADPH--hemoprotein reductase] + 3 H2O + H(+). In terms of biological role, catalyzes the oxidative degradation of the heme macrocyclic porphyrin ring in the presence of a suitable electron donor such as ascorbate or NADPH--cytochrome P450 reductase, with subsequent release of free iron. This chain is Heme-degrading monooxygenase HmoB (hmoB), found in Bacillus subtilis (strain 168).